Consider the following 686-residue polypeptide: MAM domain-containing protein 2 (686 aa).

An N-terminal signal peptide occupies residues 1–18; sequence MLLEGVLLVVQALQLASA. MAM domains are found at residues 24 to 169, 168 to 329, 340 to 498, and 507 to 666; these read GSCA…YCIE, IECD…HCQN, TSCD…NCRS, and GECT…PCAG. Asn-134 and Asn-329 each carry an N-linked (GlcNAc...) asparagine glycan. The N-linked (GlcNAc...) asparagine glycan is linked to Asn-524. Residues 665–686 form a disordered region; the sequence is AGMEDTTEQSSGYSEDLNEIEY.

Post-translationally, O-glycosylated; contains chondroitin sulfate.

It is found in the secreted. The protein resides in the extracellular space. It localises to the extracellular matrix. The chain is MAM domain-containing protein 2 (Mamdc2) from Mus musculus (Mouse).